A 228-amino-acid polypeptide reads, in one-letter code: Lipoprotein-releasing system ATP-binding protein LolD (228 aa).

One can recognise an ABC transporter domain in the interval leucine 7 to leucine 227. Alanine 43 to serine 50 is an ATP binding site.

Belongs to the ABC transporter superfamily. Lipoprotein translocase (TC 3.A.1.125) family. In terms of assembly, the complex is composed of two ATP-binding proteins (LolD) and two transmembrane proteins (LolC and LolE).

It localises to the cell inner membrane. Functionally, part of the ABC transporter complex LolCDE involved in the translocation of mature outer membrane-directed lipoproteins, from the inner membrane to the periplasmic chaperone, LolA. Responsible for the formation of the LolA-lipoprotein complex in an ATP-dependent manner. The chain is Lipoprotein-releasing system ATP-binding protein LolD from Rhizobium meliloti (strain 1021) (Ensifer meliloti).